Reading from the N-terminus, the 302-residue chain is Troponin T, cardiac muscle isoforms (302 aa).

A compositionally biased stretch (acidic residues) spans 1-55 (MSDSEEVVEEYEQEQEEEYVEEEEEEWLEEDDGQEDQVDEEEEETEETTAEEQED). 3 disordered regions span residues 1 to 99 (MSDS…GERL), 138 to 230 (KDRI…RKPL), and 280 to 302 (SDHQKVKGSKAARGKTMVGGRWK). Position 2 is an N-acetylserine (serine 2). At serine 2 the chain carries Phosphoserine; by CK2. Basic and acidic residues predominate over residues 65–79 (EGDREQEPGEGESKP). The segment covering 82 to 93 (KPFMPNLVPPKI) has biased composition (pro residues). Basic and acidic residues-rich tracts occupy residues 138 to 186 (KDRI…EKEA) and 204 to 230 (KSEKKGGKKQTEREKKKKILSERRKPL).

The protein belongs to the troponin T family.

Functionally, troponin T is the tropomyosin-binding subunit of troponin, the thin filament regulatory complex which confers calcium-sensitivity to striated muscle actomyosin ATPase activity. The chain is Troponin T, cardiac muscle isoforms (TNNT2) from Gallus gallus (Chicken).